A 194-amino-acid polypeptide reads, in one-letter code: Transcriptional repressor NrdR (194 aa).

The segment at 3–33 is a zinc-finger region; sequence CPFCGHADDRVLDTRVQKDGSIRRRRECLEC. Residues 48–138 enclose the ATP-cone domain; that stretch reads PFIIKKDGRR…VYRTFKDVQE (91 aa). Positions 168-179 are enriched in basic and acidic residues; sequence ESEKSTNHETDS. A disordered region spans residues 168–194; the sequence is ESEKSTNHETDSKTPSPRTRPPGPLSN. Over residues 185–194 the composition is skewed to pro residues; that stretch reads RTRPPGPLSN.

It belongs to the NrdR family. Zn(2+) is required as a cofactor.

In terms of biological role, negatively regulates transcription of bacterial ribonucleotide reductase nrd genes and operons by binding to NrdR-boxes. This Bdellovibrio bacteriovorus (strain ATCC 15356 / DSM 50701 / NCIMB 9529 / HD100) protein is Transcriptional repressor NrdR.